Here is a 354-residue protein sequence, read N- to C-terminus: cAMP-dependent protein kinase catalytic subunit 2 (354 aa).

The 257-residue stretch at 45–301 folds into the Protein kinase domain; sequence YITRAVLGNG…SSDVKSHPWF (257 aa). Residues 51-59 and Lys-74 contribute to the ATP site; that span reads LGNGSFGTV. The Proton acceptor role is filled by Asp-168. The 53-residue stretch at 302–354 folds into the AGC-kinase C-terminal domain; the sequence is QGVDWFGILNQEVTAPYQPTISGAEDLSNFENFEFKDRYKSRINRHPELFANF.

This sequence belongs to the protein kinase superfamily. AGC Ser/Thr protein kinase family. cAMP subfamily. As to expression, more abundant in adult body than adult head.

The catalysed reaction is L-seryl-[protein] + ATP = O-phospho-L-seryl-[protein] + ADP + H(+). It carries out the reaction L-threonyl-[protein] + ATP = O-phospho-L-threonyl-[protein] + ADP + H(+). The sequence is that of cAMP-dependent protein kinase catalytic subunit 2 (Pka-C2) from Drosophila melanogaster (Fruit fly).